Reading from the N-terminus, the 87-residue chain is Costars family protein (87 aa).

The protein belongs to the costars family.

The protein is Costars family protein of Oryza sativa subsp. indica (Rice).